The following is a 102-amino-acid chain: uncharacterized protein (102 aa).

The HTH cro/C1-type domain occupies Leu48–Ile102. The segment at residues Leu59 to Gln78 is a DNA-binding region (H-T-H motif).

This is an uncharacterized protein from Haemophilus influenzae (strain ATCC 51907 / DSM 11121 / KW20 / Rd).